The primary structure comprises 292 residues: N-acetylneuraminate lyase (292 aa).

S47 and T48 together coordinate aceneuramate. The Proton donor role is filled by Y136. K164 (schiff-base intermediate with substrate) is an active-site residue. Aceneuramate-binding residues include T166, G188, D190, E191, and S207.

It belongs to the DapA family. NanA subfamily. As to quaternary structure, homotetramer.

It is found in the cytoplasm. The catalysed reaction is aceneuramate = aldehydo-N-acetyl-D-mannosamine + pyruvate. It functions in the pathway amino-sugar metabolism; N-acetylneuraminate degradation; D-fructose 6-phosphate from N-acetylneuraminate: step 1/5. In terms of biological role, catalyzes the reversible aldol cleavage of N-acetylneuraminic acid (sialic acid; Neu5Ac) to form pyruvate and N-acetylmannosamine (ManNAc) via a Schiff base intermediate. The sequence is that of N-acetylneuraminate lyase from Actinobacillus pleuropneumoniae serotype 5b (strain L20).